A 130-amino-acid polypeptide reads, in one-letter code: DNA-directed RNA polymerase subunit omega (130 aa).

The tract at residues 110 to 130 is disordered; sequence EELLKGLEGLAPPEEQPEEDE.

This sequence belongs to the RNA polymerase subunit omega family. As to quaternary structure, the RNAP catalytic core consists of 2 alpha, 1 beta, 1 beta' and 1 omega subunit. When a sigma factor is associated with the core the holoenzyme is formed, which can initiate transcription.

The catalysed reaction is RNA(n) + a ribonucleoside 5'-triphosphate = RNA(n+1) + diphosphate. Its function is as follows. Promotes RNA polymerase assembly. Latches the N- and C-terminal regions of the beta' subunit thereby facilitating its interaction with the beta and alpha subunits. In Bradyrhizobium sp. (strain BTAi1 / ATCC BAA-1182), this protein is DNA-directed RNA polymerase subunit omega.